Reading from the N-terminus, the 1563-residue chain is DNA-directed RNA polymerase subunit beta' (1563 aa).

Residues Cys-61, Cys-63, Cys-76, and Cys-79 each contribute to the Zn(2+) site. Mg(2+)-binding residues include Asp-588, Asp-590, and Asp-592. 4 residues coordinate Zn(2+): Cys-925, Cys-999, Cys-1006, and Cys-1009.

This sequence belongs to the RNA polymerase beta' chain family. In terms of assembly, the RNAP catalytic core consists of 2 alpha, 1 beta, 1 beta' and 1 omega subunit. When a sigma factor is associated with the core the holoenzyme is formed, which can initiate transcription. Mg(2+) is required as a cofactor. The cofactor is Zn(2+).

The enzyme catalyses RNA(n) + a ribonucleoside 5'-triphosphate = RNA(n+1) + diphosphate. Its function is as follows. DNA-dependent RNA polymerase catalyzes the transcription of DNA into RNA using the four ribonucleoside triphosphates as substrates. The chain is DNA-directed RNA polymerase subunit beta' from Hydrogenobaculum sp. (strain Y04AAS1).